We begin with the raw amino-acid sequence, 665 residues long: MAAGGAEGGPGPSAAMGDCAEIKSQFRTREGFYKLLPGDATRRSGPTSAQTPAPPQPTQPPPGPAAASGPGAAGPASSPPPAGPGPGPALPAVRLSLVRLGDPDGAGEPPSTPSGLGAGGDRVCFNLGRELYFYPGCCRSGSQRSIDLNKPIDKRIYKGTQPTCHDFNQFTAATETISLLVGFSAGQVQYLDLIKKDTSKLFNEERLIDKTKVTYLKWLPESESLFLASHASGHLYLYNVSHPCTSTPPQYSLLKQGEGFAVYAAKSKAPRNPLAKWAVGEGPLNEFAFSPDGRHLACVSQDGCLRVFHFDSMLLRGLMKSYFGGLLCVCWSPDGRYVVTGGEDDLVTVWSFTEGRVVARGHGHKSWVNAVAFDPYTTRAEEAASASADGDPSGEEEEPEVTSSDTGAPVSPLPKAGSITYRFGSAGQDTQFCLWDLTEDVLSPHPSLARTRTLPGTPGATPPASGSSRAGETGAGPLPRSLSRSNSLPHPAGGGKAGGPSASMEPGIPFSIGRFATLTLQERRDRGAEKEHKRYHSLGNISRGGSGGNSSNDKLSGPAPRSRLDPAKVLGTALCPRIHEVPLLEPLVCKKIAQERLTVLLFLEDCIITACQEGLICTWARPGKAFTDEETEAQAGQASWPRSPSKSVVEGISSQPGSSPSGTVV.

A compositionally biased stretch (gly residues) spans methionine 1–glycine 11. Disordered stretches follow at residues methionine 1–proline 91 and leucine 100–glycine 119. The residue at position 2 (alanine 2) is an N-acetylalanine. A compositionally biased stretch (pro residues) spans proline 52 to proline 64. Residues alanine 65 to alanine 76 show a composition bias toward low complexity. Positions serine 77–alanine 89 are enriched in pro residues. 4 WD repeats span residues isoleucine 208–proline 248, valine 279–leucine 318, serine 321–arginine 360, and glycine 363–histidine 445. 4 disordered regions span residues alanine 380 to leucine 413, proline 446 to proline 506, arginine 524 to leucine 564, and aspartate 628 to valine 665. Residues arginine 450–proline 491 are compositionally biased toward low complexity. Serine 487 carries the phosphoserine modification. Arginine 543 carries the omega-N-methylarginine modification. One copy of the WD 5 repeat lies at isoleucine 592–glutamate 629. Residues glutamine 634 to lysine 646 show a composition bias toward polar residues. The segment covering serine 653–valine 665 has biased composition (low complexity).

As to quaternary structure, component of the USP12/DMWD/WDR48 deubiquitinating complex. Interacts with USP12; promotes its enzymatic activity. Interacts with USP46. Widely expressed in brain where it localizes to the olfactory bulb, forebrain, thalamus, hippocampus, cerebellum, cortex and hypothalamus (at protein level). Expression seems to be particularly strong in areas of high synaptic density such as the glomerular layer of the olfactory bulb, and mossy fiber terminal fields of the hippocampus (at protein level). Expressed in retina, with strongest expression in the external and internal plexiform layers (at protein level). Strongly expressed in brain and testis. Also detected at lower levels in heart, kidney, liver, lung, ovary, uterus, bladder and skeletal muscle. In testis, expression seems to be restricted to secondary spermatocytes.

Its subcellular location is the cytoplasm. It localises to the nucleus. The protein localises to the perikaryon. The protein resides in the cell projection. It is found in the dendrite. Functionally, regulator of the deubiquitinating USP12/DMWD/WDR48 complex. Functions as a cofactor that promotes USP12 enzymatic activity. This Mus musculus (Mouse) protein is Dystrophia myotonica WD repeat-containing protein (Dmwd).